A 157-amino-acid chain; its full sequence is Small ribosomal subunit protein uS7 (157 aa).

It belongs to the universal ribosomal protein uS7 family. As to quaternary structure, part of the 30S ribosomal subunit. Contacts proteins S9 and S11.

Its function is as follows. One of the primary rRNA binding proteins, it binds directly to 16S rRNA where it nucleates assembly of the head domain of the 30S subunit. Is located at the subunit interface close to the decoding center, probably blocks exit of the E-site tRNA. This chain is Small ribosomal subunit protein uS7, found in Chlamydia trachomatis serovar L2 (strain ATCC VR-902B / DSM 19102 / 434/Bu).